A 461-amino-acid polypeptide reads, in one-letter code: Argininosuccinate lyase (461 aa).

It belongs to the lyase 1 family. Argininosuccinate lyase subfamily.

The protein localises to the cytoplasm. It catalyses the reaction 2-(N(omega)-L-arginino)succinate = fumarate + L-arginine. It functions in the pathway amino-acid biosynthesis; L-arginine biosynthesis; L-arginine from L-ornithine and carbamoyl phosphate: step 3/3. The protein is Argininosuccinate lyase of Trichormus variabilis (strain ATCC 29413 / PCC 7937) (Anabaena variabilis).